Reading from the N-terminus, the 143-residue chain is Large ribosomal subunit protein uL11 (143 aa).

Belongs to the universal ribosomal protein uL11 family. Part of the ribosomal stalk of the 50S ribosomal subunit. Interacts with L10 and the large rRNA to form the base of the stalk. L10 forms an elongated spine to which L12 dimers bind in a sequential fashion forming a multimeric L10(L12)X complex. In terms of processing, one or more lysine residues are methylated.

Forms part of the ribosomal stalk which helps the ribosome interact with GTP-bound translation factors. This Pseudomonas fluorescens (strain SBW25) protein is Large ribosomal subunit protein uL11.